A 23-amino-acid chain; its full sequence is U3-ctenitoxin-Co1a (23 aa).

Disulfide bonds link C2/C17 and C9/C22.

As to expression, expressed by the venom gland.

It is found in the secreted. In terms of biological role, antagonist of L-type calcium channels (Cav1/CACNA1). The protein is U3-ctenitoxin-Co1a of Ctenus ornatus (Brazilian spider).